We begin with the raw amino-acid sequence, 764 residues long: Zinc finger CCCH domain-containing protein 24 (764 aa).

ANK repeat units follow at residues 108–138 (EHRT…DVNR) and 143–175 (DGTT…DADA). The C3H1-type zinc finger occupies 321–348 (HYSCVPCPDFRKGVCRRGDMCEYAHGVF). 2 disordered regions span residues 616 to 665 (QREK…DWGV) and 698 to 732 (KESP…EGPS). Positions 640–659 (SGVVGSPLSSSWSKWGSPSG) are enriched in low complexity. Residues 705-716 (QVTTAESINSVG) are compositionally biased toward polar residues.

The protein is Zinc finger CCCH domain-containing protein 24 of Oryza sativa subsp. japonica (Rice).